A 184-amino-acid chain; its full sequence is Ribosome-recycling factor (184 aa).

The protein belongs to the RRF family.

The protein localises to the cytoplasm. Functionally, responsible for the release of ribosomes from messenger RNA at the termination of protein biosynthesis. May increase the efficiency of translation by recycling ribosomes from one round of translation to another. This Clostridium botulinum (strain Loch Maree / Type A3) protein is Ribosome-recycling factor.